The sequence spans 336 residues: Ferrochelatase (336 aa).

Fe cation is bound by residues H206 and E287.

It belongs to the ferrochelatase family.

Its subcellular location is the cytoplasm. It carries out the reaction heme b + 2 H(+) = protoporphyrin IX + Fe(2+). The protein operates within porphyrin-containing compound metabolism; protoheme biosynthesis; protoheme from protoporphyrin-IX: step 1/1. In terms of biological role, catalyzes the ferrous insertion into protoporphyrin IX. This is Ferrochelatase from Neisseria gonorrhoeae (strain ATCC 700825 / FA 1090).